Reading from the N-terminus, the 97-residue chain is MIKSELFERITEKKTYIPAKIIEYVVKNILEYMSLSLEKGNRIEIRGFGSFSLHYRFARIGRNPKTGEKVYLKEKYVPHFKPGKQLRDRINNIYKKI.

This sequence belongs to the bacterial histone-like protein family. As to quaternary structure, heterodimer of an alpha and a beta chain.

This protein is one of the two subunits of integration host factor, a specific DNA-binding protein that functions in genetic recombination as well as in transcriptional and translational control. The protein is Integration host factor subunit beta of Buchnera aphidicola subsp. Cinara cedri (strain Cc).